We begin with the raw amino-acid sequence, 92 residues long: WAP four-disulfide core domain protein 12 (92 aa).

An N-terminal signal peptide occupies residues 1–23; the sequence is MGSSRFLVLMVSLALVTLVAAEG. The 48-residue stretch at 27-74 folds into the WAP domain; the sequence is NIEKPEVCPADNVRCIKSDPPQCHTDQDCQGIRKCCYLHCGFKCVIPV. 4 disulfide bridges follow: Cys-34–Cys-62, Cys-41–Cys-66, Cys-49–Cys-61, and Cys-55–Cys-70.

The protein resides in the secreted. Functionally, antibacterial protein. Putative acid-stable proteinase inhibitor. The sequence is that of WAP four-disulfide core domain protein 12 (WFDC12) from Aotus nancymaae (Ma's night monkey).